We begin with the raw amino-acid sequence, 349 residues long: Glycerol-3-phosphate dehydrogenase [NAD(P)+] (349 aa).

Tryptophan 20, arginine 43, arginine 44, and lysine 117 together coordinate NADPH. 2 residues coordinate sn-glycerol 3-phosphate: lysine 117 and glycine 147. Alanine 151 lines the NADPH pocket. Residues lysine 202, aspartate 255, serine 265, arginine 266, and asparagine 267 each coordinate sn-glycerol 3-phosphate. Residue lysine 202 is the Proton acceptor of the active site. Arginine 266 is a binding site for NADPH. Residues valine 297 and glutamate 299 each contribute to the NADPH site.

This sequence belongs to the NAD-dependent glycerol-3-phosphate dehydrogenase family.

It localises to the cytoplasm. It carries out the reaction sn-glycerol 3-phosphate + NAD(+) = dihydroxyacetone phosphate + NADH + H(+). The catalysed reaction is sn-glycerol 3-phosphate + NADP(+) = dihydroxyacetone phosphate + NADPH + H(+). It participates in membrane lipid metabolism; glycerophospholipid metabolism. Catalyzes the reduction of the glycolytic intermediate dihydroxyacetone phosphate (DHAP) to sn-glycerol 3-phosphate (G3P), the key precursor for phospholipid synthesis. In Mycobacterium leprae (strain TN), this protein is Glycerol-3-phosphate dehydrogenase [NAD(P)+].